The following is a 164-amino-acid chain: Peptidyl-prolyl cis-trans isomerase A (164 aa).

An N-acetylmethionine modification is found at methionine 1. Residue valine 2 is modified to N-acetylvaline; in Peptidyl-prolyl cis-trans isomerase A, N-terminally processed. One can recognise a PPIase cyclophilin-type domain in the interval 7–163; that stretch reads FFDIAVDGEP…KKITIANCGQ (157 aa). Lysine 28 bears the N6-acetyllysine; alternate mark. A Glycyl lysine isopeptide (Lys-Gly) (interchain with G-Cter in SUMO2); alternate cross-link involves residue lysine 28. A Glycyl lysine isopeptide (Lys-Gly) (interchain with G-Cter in ubiquitin); alternate cross-link involves residue lysine 28. Lysine 44 and lysine 76 each carry N6-acetyllysine. Residue serine 77 is modified to Phosphoserine. Lysine 82 is modified (N6-acetyllysine; alternate). Lysine 82 is covalently cross-linked (Glycyl lysine isopeptide (Lys-Gly) (interchain with G-Cter in SUMO2); alternate). Position 93 is a phosphothreonine (threonine 93). N-linked (GlcNAc...) asparagine glycosylation occurs at asparagine 108. An N6-acetyllysine mark is found at lysine 125 and lysine 133.

This sequence belongs to the cyclophilin-type PPIase family. PPIase A subfamily. In terms of assembly, interacts with protein phosphatase PPP3CA/calcineurin A. Interacts with isoform 2 of BSG/CD147. Interacts with FOXO1; the interaction promotes FOXO1 dephosphorylation, nuclear accumulation and transcriptional activity. Interacts with integrin ITGA2B:ITGB3; the interaction is ROS and peptidyl-prolyl cis-trans isomerase (PPIase) activity-dependent and is increased in the presence of thrombin. Interacts with MAP3K5. Interacts with TARDBP; the interaction is dependent on the RNA-binding activity of TARDBP and the PPIase activity of PPIA/CYPA and the acetylation of PPIA/CYPA at Lys-125 favors the interaction. Interacts with HNRNPA1, HNRNPA2B1, HNRNPC, RBMX, HNRNPK and HNRNPM. In terms of processing, acetylation at Lys-125 markedly inhibits catalysis of cis to trans isomerization. PPIA acetylation also antagonizes the immunosuppressive effects of cyclosporine by inhibiting the sequential steps of cyclosporine binding and calcineurin inhibition. Acetylation at Lys-125 favors the interaction with TARDBP.

Its subcellular location is the cytoplasm. The protein resides in the secreted. It is found in the nucleus. The catalysed reaction is [protein]-peptidylproline (omega=180) = [protein]-peptidylproline (omega=0). With respect to regulation, binds cyclosporin A (CsA). CsA mediates some of its effects via an inhibitory action on PPIase. Catalyzes the cis-trans isomerization of proline imidic peptide bonds in oligopeptides. Exerts a strong chemotactic effect on leukocytes partly through activation of one of its membrane receptors BSG/CD147, initiating a signaling cascade that culminates in MAPK/ERK activation. Activates endothelial cells (ECs) in a proinflammatory manner by stimulating activation of NF-kappa-B and ERK, JNK and p38 MAP-kinases and by inducing expression of adhesion molecules including SELE and VCAM1. Induces apoptosis in ECs by promoting the FOXO1-dependent expression of CCL2 and BCL2L11 which are involved in EC chemotaxis and apoptosis. In response to oxidative stress, initiates proapoptotic and antiapoptotic signaling in ECs via activation of NF-kappa-B and AKT1 and up-regulation of antiapoptotic protein BCL2. Negatively regulates MAP3K5/ASK1 kinase activity, autophosphorylation and oxidative stress-induced apoptosis mediated by MAP3K5/ASK1. Necessary for the assembly of TARDBP in heterogeneous nuclear ribonucleoprotein (hnRNP) complexes and regulates TARDBP binding to RNA UG repeats and TARDBP-dependent expression of HDAC6, ATG7 and VCP which are involved in clearance of protein aggregates. Plays an important role in platelet activation and aggregation. Regulates calcium mobilization and integrin ITGA2B:ITGB3 bidirectional signaling via increased ROS production as well as by facilitating the interaction between integrin and the cell cytoskeleton. Binds heparan sulfate glycosaminoglycans. The chain is Peptidyl-prolyl cis-trans isomerase A (PPIA) from Oryctolagus cuniculus (Rabbit).